Consider the following 375-residue polypeptide: Trans-enoyl reductase BOA5 (375 aa).

The segment covering 1 to 16 has biased composition (polar residues); the sequence is MQAVIQTGPGTLQLTE. Residues 1–21 form a disordered region; that stretch reads MQAVIQTGPGTLQLTENVPKP. 42-45 provides a ligand contact to NADP(+); the sequence is SDWK. A substrate-binding site is contributed by 121–128; sequence VGIVTTGL. A disordered region spans residues 147-168; it reads GSAAPQKTRVGPRGWSGGDALT. NADP(+) contacts are provided by residues 185–188, 208–211, Tyr226, and 273–274; these read STST, SPHN, and LD. 294 to 298 serves as a coordination point for substrate; sequence ALTIF. 363–364 contributes to the NADP(+) binding site; the sequence is VS.

Belongs to the zinc-containing alcohol dehydrogenase family. As to quaternary structure, monomer.

The protein operates within polyketide biosynthesis. Functionally, trans-enoyl reductase; part of the gene cluster A that mediates the biosynthesis of botcinic acid and its botcinin derivatives, acetate-derived polyketides that contribute to virulence when combined with the sesquiterpene botrydial. Botcinic acid and its derivatives have been shown to induce chlorosis and necrosis during host plant infection, but also have antifungal activities. Two polyketide synthases, BOA6 and BOA9, are involved in the biosynthesis of botcinins. BOA6 mediates the formation of the per-methylated tetraketide core by condensation of four units of malonyl-CoA with one unit of acetyl-CoA, which would be methylated in activated methylene groups to yield a bicyclic acid intermediate that could then either be converted to botrylactone derivatives or lose the starter acetate unit through a retro-Claisen type C-C bond cleavage to yield botcinin derivatives. The second polyketide synthase, BOA9, is probably required for the biosynthesis of the tetraketide side chain of botcinins. The methyltransferase (MT) domain within BOA6 is probably responsible for the incorporation of four methyl groups. The trans-enoyl reductase BOA5 might take over the enoyl reductase function of BOA6 that misses an ER domain. The monooxygenases BOA2, BOA3 and BOA4 might be involved in further hydroxylations at C4, C5 and C8, whereas BOA7, close to BOA9, could potentially be involved in the hydroxylation at C4 in the side chain of botcinins. This Botryotinia fuckeliana (strain B05.10) (Noble rot fungus) protein is Trans-enoyl reductase BOA5.